Here is a 363-residue protein sequence, read N- to C-terminus: MNPRTVQPLDVPPLYCPIPPEIHPDLALIEKRSIDWFQGFGVFPGEAGRALLRGWQFPALAARAYPEEDAERVRIVADFVHWTTFDDVLIDTDHSHVDDVLPGAPPDLLAVATKMVRMLEVPDAALLPGDPWIRSLMDLRRRLGTIAAPEQMARWTGAFREYLLAATWKRFCRQARRLPSLADYVTMRTADGGVQMYVALSEVVGGYRLTDRDLATPAVRAVTEMALTLIAWDNDLFSHYKESLTAGPCINLIDVIAGERGCSLEDAVPVAVAMRDRVMCRYMAVRERTERDLGVAARRYVRSLDRWIAANIDMSATSTRYTNPLNRPATEMPRARFTPARTDLPSDDSPLALPFPDIAWWWD.

Mg(2+) is bound by residues Asp93, Asp98, Asn234, Ser238, and Glu242.

It belongs to the terpene synthase family. Mg(2+) serves as cofactor.

The enzyme catalyses (2E,6E,10E)-geranylgeranyl diphosphate = bonnadiene + diphosphate. Its pathway is secondary metabolite biosynthesis; terpenoid biosynthesis. Functionally, diterpene synthase that catalyzes the conversion of geranylgeranyl diphosphate (GGPP) to bonnadiene. Cannot use geranyl diphosphate (GPP), farnesyl diphosphate (FPP) and geranylfarnesyl diphosphate (GFPP). This is Bonnadiene synthase from Allokutzneria albata (Kibdelosporangium albatum).